The sequence spans 432 residues: 3-phosphoshikimate 1-carboxyvinyltransferase (432 aa).

3 residues coordinate 3-phosphoshikimate: Lys21, Ser22, and Arg26. Lys21 serves as a coordination point for phosphoenolpyruvate. Gly93 and Arg121 together coordinate phosphoenolpyruvate. The 3-phosphoshikimate site is built by Ser166, Gln168, Asp318, and Lys345. Gln168 contacts phosphoenolpyruvate. Asp318 acts as the Proton acceptor in catalysis. Residues Arg349 and Arg391 each coordinate phosphoenolpyruvate.

It belongs to the EPSP synthase family. In terms of assembly, monomer.

It localises to the cytoplasm. The catalysed reaction is 3-phosphoshikimate + phosphoenolpyruvate = 5-O-(1-carboxyvinyl)-3-phosphoshikimate + phosphate. Its pathway is metabolic intermediate biosynthesis; chorismate biosynthesis; chorismate from D-erythrose 4-phosphate and phosphoenolpyruvate: step 6/7. Functionally, catalyzes the transfer of the enolpyruvyl moiety of phosphoenolpyruvate (PEP) to the 5-hydroxyl of shikimate-3-phosphate (S3P) to produce enolpyruvyl shikimate-3-phosphate and inorganic phosphate. This is 3-phosphoshikimate 1-carboxyvinyltransferase from Persephonella marina (strain DSM 14350 / EX-H1).